A 434-amino-acid polypeptide reads, in one-letter code: Adenylosuccinate synthetase (434 aa).

GTP is bound by residues 11–17 (GDEGKGK) and 39–41 (GHT). Aspartate 12 functions as the Proton acceptor in the catalytic mechanism. Mg(2+) contacts are provided by aspartate 12 and glycine 39. IMP is bound by residues 12–15 (DEGK), 37–40 (NAGH), threonine 134, arginine 148, asparagine 230, threonine 245, and arginine 309. The Proton donor role is filled by histidine 40. A substrate-binding site is contributed by 305 to 311 (VTTGRKR). GTP-binding positions include arginine 311, 337–339 (KLD), and 419–421 (GTG).

It belongs to the adenylosuccinate synthetase family. Homodimer. Requires Mg(2+) as cofactor.

The protein localises to the cytoplasm. It catalyses the reaction IMP + L-aspartate + GTP = N(6)-(1,2-dicarboxyethyl)-AMP + GDP + phosphate + 2 H(+). The protein operates within purine metabolism; AMP biosynthesis via de novo pathway; AMP from IMP: step 1/2. Plays an important role in the de novo pathway and in the salvage pathway of purine nucleotide biosynthesis. Catalyzes the first committed step in the biosynthesis of AMP from IMP. The chain is Adenylosuccinate synthetase from Lachancea thermotolerans (strain ATCC 56472 / CBS 6340 / NRRL Y-8284) (Yeast).